Here is a 242-residue protein sequence, read N- to C-terminus: DNA repair protein RecO (242 aa).

The protein belongs to the RecO family.

Functionally, involved in DNA repair and RecF pathway recombination. The chain is DNA repair protein RecO from Wolbachia pipientis subsp. Culex pipiens (strain wPip).